Here is a 54-residue protein sequence, read N- to C-terminus: MNYWVLALHYNWASSEMVKQAIHLKDCSPEDLQEGIEKKLITAEQYKEITGEAI.

The protein to B.subtilis XkdX.

This is an uncharacterized protein from Bacillus subtilis (strain 168).